The chain runs to 255 residues: 3-deoxy-manno-octulosonate cytidylyltransferase (255 aa).

The protein belongs to the KdsB family.

It is found in the cytoplasm. The catalysed reaction is 3-deoxy-alpha-D-manno-oct-2-ulosonate + CTP = CMP-3-deoxy-beta-D-manno-octulosonate + diphosphate. It participates in nucleotide-sugar biosynthesis; CMP-3-deoxy-D-manno-octulosonate biosynthesis; CMP-3-deoxy-D-manno-octulosonate from 3-deoxy-D-manno-octulosonate and CTP: step 1/1. The protein operates within bacterial outer membrane biogenesis; lipopolysaccharide biosynthesis. In terms of biological role, activates KDO (a required 8-carbon sugar) for incorporation into bacterial lipopolysaccharide in Gram-negative bacteria. The polypeptide is 3-deoxy-manno-octulosonate cytidylyltransferase (Glaesserella parasuis serovar 5 (strain SH0165) (Haemophilus parasuis)).